A 453-amino-acid chain; its full sequence is Putative long chain fatty acid-CoA ligase VraA (453 aa).

Belongs to the ATP-dependent AMP-binding enzyme family.

The polypeptide is Putative long chain fatty acid-CoA ligase VraA (vraA) (Staphylococcus epidermidis (strain ATCC 35984 / DSM 28319 / BCRC 17069 / CCUG 31568 / BM 3577 / RP62A)).